Consider the following 245-residue polypeptide: Dehydrogenase/reductase SDR family member 6 (245 aa).

NAD(+) contacts are provided by residues 16–18 (QGI), aspartate 37, and aspartate 58. Residue arginine 144 coordinates substrate. Catalysis depends on tyrosine 147, which acts as the Proton acceptor. NAD(+) contacts are provided by residues lysine 151 and 180-184 (VDTPS). 2 residues coordinate substrate: arginine 188 and arginine 205.

It belongs to the short-chain dehydrogenases/reductases (SDR) family. Homotetramer. As to expression, detected in liver, spleen and macrophages. Widely expressed.

The protein localises to the cytoplasm. It catalyses the reaction cis-4-hydroxy-L-proline + NAD(+) = 4-oxo-L-proline + NADH + H(+). The enzyme catalyses (R)-3-hydroxybutanoate + NAD(+) = acetoacetate + NADH + H(+). It functions in the pathway amino-acid metabolism. Its pathway is siderophore biosynthesis. In terms of biological role, NAD(H)-dependent dehydrogenase/reductase with a preference for cyclic substrates. Catalyzes stereoselective conversion of 4-oxo-L-proline to cis-4-hydroxy-L-proline, likely a detoxification mechanism for ketoprolines. Mediates the formation of 2,5-dihydroxybenzoate (2,5-DHBA), a siderophore that chelates free cytoplasmic iron and associates with LCN2, thereby regulating iron transport and homeostasis while protecting cells against free radical-induced oxidative stress. The iron-siderophore complex is imported into mitochondria, providing an iron source for mitochondrial metabolic processes in particular heme synthesis. May act as a 3-hydroxybutyrate dehydrogenase. Functionally, (Microbial infection) May play a role in susceptibility to bacterial infection by providing an assimilable source of iron that is exploited by pathogenic bacteria. Host iron-siderophore complexes can be used by bacteria to promote their own growth and pathogenicity. The polypeptide is Dehydrogenase/reductase SDR family member 6 (Mus musculus (Mouse)).